The primary structure comprises 269 residues: Indole-3-glycerol phosphate synthase (269 aa).

The protein belongs to the TrpC family.

The catalysed reaction is 1-(2-carboxyphenylamino)-1-deoxy-D-ribulose 5-phosphate + H(+) = (1S,2R)-1-C-(indol-3-yl)glycerol 3-phosphate + CO2 + H2O. The protein operates within amino-acid biosynthesis; L-tryptophan biosynthesis; L-tryptophan from chorismate: step 4/5. In Saccharopolyspora erythraea (strain ATCC 11635 / DSM 40517 / JCM 4748 / NBRC 13426 / NCIMB 8594 / NRRL 2338), this protein is Indole-3-glycerol phosphate synthase.